The primary structure comprises 120 residues: Large ribosomal subunit protein uL18 (120 aa).

This sequence belongs to the universal ribosomal protein uL18 family. As to quaternary structure, part of the 50S ribosomal subunit; part of the 5S rRNA/L5/L18/L25 subcomplex. Contacts the 5S and 23S rRNAs.

In terms of biological role, this is one of the proteins that bind and probably mediate the attachment of the 5S RNA into the large ribosomal subunit, where it forms part of the central protuberance. This is Large ribosomal subunit protein uL18 from Chloroflexus aurantiacus (strain ATCC 29364 / DSM 637 / Y-400-fl).